Consider the following 144-residue polypeptide: L-fucose mutarotase (144 aa).

His-22 acts as the Proton donor in catalysis. Substrate is bound by residues Asp-30, Arg-109, and 131-133 (YGN).

This sequence belongs to the RbsD / FucU family. FucU mutarotase subfamily. As to quaternary structure, homodecamer.

It localises to the cytoplasm. The enzyme catalyses alpha-L-fucose = beta-L-fucose. Its pathway is carbohydrate metabolism; L-fucose metabolism. Its function is as follows. Involved in the anomeric conversion of L-fucose. This Haemophilus influenzae (strain PittGG) protein is L-fucose mutarotase.